The following is a 487-amino-acid chain: N-succinylglutamate 5-semialdehyde dehydrogenase (487 aa).

221–226 (GSSDTG) provides a ligand contact to NAD(+). Catalysis depends on residues E244 and C278.

The protein belongs to the aldehyde dehydrogenase family. AstD subfamily.

It catalyses the reaction N-succinyl-L-glutamate 5-semialdehyde + NAD(+) + H2O = N-succinyl-L-glutamate + NADH + 2 H(+). It functions in the pathway amino-acid degradation; L-arginine degradation via AST pathway; L-glutamate and succinate from L-arginine: step 4/5. Its function is as follows. Catalyzes the NAD-dependent reduction of succinylglutamate semialdehyde into succinylglutamate. This Burkholderia ambifaria (strain MC40-6) protein is N-succinylglutamate 5-semialdehyde dehydrogenase.